The primary structure comprises 801 residues: Cadherin-20 (801 aa).

Positions 1–34 (MWTSGRMSNAKNWLGLGMSLYFWGLMDLTTTVLS) are cleaved as a signal peptide. The propeptide occupies 35–59 (DTPTPQGELEALLSDKPQSHQRTKR). Residues 60 to 619 (SWVWNQFFVL…AYMLPVSLSR (560 aa)) are Extracellular-facing. Cadherin domains lie at 61–165 (WVWN…EPKF), 166–274 (LDGP…PPRF), 275–389 (PQKH…PPVF), 390–494 (EPGF…APEF), and 494–610 (FPRF…SPEA). N-linked (GlcNAc...) asparagine glycosylation occurs at asparagine 261. Residues asparagine 420, asparagine 461, and asparagine 542 are each glycosylated (N-linked (GlcNAc...) asparagine). The helical transmembrane segment at 620–640 (GALIAILACIFVLLVLVLLIL) threads the bilayer. Residues 641–801 (SMRRHRKQPY…GASEGPAPLW (161 aa)) lie on the Cytoplasmic side of the membrane.

In terms of tissue distribution, expressed in placenta, adult brain, and fetal brain.

The protein resides in the cell membrane. Functionally, cadherins are calcium-dependent cell adhesion proteins. They preferentially interact with themselves in a homophilic manner in connecting cells; cadherins may thus contribute to the sorting of heterogeneous cell types. The polypeptide is Cadherin-20 (CDH20) (Homo sapiens (Human)).